A 380-amino-acid chain; its full sequence is Methylthioribose-1-phosphate isomerase (380 aa).

Aspartate 257 serves as the catalytic Proton donor.

It belongs to the eIF-2B alpha/beta/delta subunits family. MtnA subfamily.

It localises to the cytoplasm. Its subcellular location is the nucleus. The enzyme catalyses 5-(methylsulfanyl)-alpha-D-ribose 1-phosphate = 5-(methylsulfanyl)-D-ribulose 1-phosphate. The protein operates within amino-acid biosynthesis; L-methionine biosynthesis via salvage pathway; L-methionine from S-methyl-5-thio-alpha-D-ribose 1-phosphate: step 1/6. Functionally, catalyzes the interconversion of methylthioribose-1-phosphate (MTR-1-P) into methylthioribulose-1-phosphate (MTRu-1-P). The chain is Methylthioribose-1-phosphate isomerase from Naegleria gruberi (Amoeba).